Consider the following 425-residue polypeptide: Serine--tRNA ligase (425 aa).

232–234 contributes to the L-serine binding site; the sequence is TSE. Residues 263–265 and Val-279 contribute to the ATP site; that span reads RRE. Glu-286 lines the L-serine pocket. 350–353 contributes to the ATP binding site; it reads EVVS. Thr-387 provides a ligand contact to L-serine.

This sequence belongs to the class-II aminoacyl-tRNA synthetase family. Type-1 seryl-tRNA synthetase subfamily. In terms of assembly, homodimer. The tRNA molecule binds across the dimer.

It is found in the cytoplasm. It carries out the reaction tRNA(Ser) + L-serine + ATP = L-seryl-tRNA(Ser) + AMP + diphosphate + H(+). The enzyme catalyses tRNA(Sec) + L-serine + ATP = L-seryl-tRNA(Sec) + AMP + diphosphate + H(+). It participates in aminoacyl-tRNA biosynthesis; selenocysteinyl-tRNA(Sec) biosynthesis; L-seryl-tRNA(Sec) from L-serine and tRNA(Sec): step 1/1. Its function is as follows. Catalyzes the attachment of serine to tRNA(Ser). Is also able to aminoacylate tRNA(Sec) with serine, to form the misacylated tRNA L-seryl-tRNA(Sec), which will be further converted into selenocysteinyl-tRNA(Sec). This is Serine--tRNA ligase from Methanoregula boonei (strain DSM 21154 / JCM 14090 / 6A8).